Consider the following 229-residue polypeptide: Translation initiation factor 6 (229 aa).

This sequence belongs to the eIF-6 family.

Binds to the 50S ribosomal subunit and prevents its association with the 30S ribosomal subunit to form the 70S initiation complex. In Thermococcus kodakarensis (strain ATCC BAA-918 / JCM 12380 / KOD1) (Pyrococcus kodakaraensis (strain KOD1)), this protein is Translation initiation factor 6.